The chain runs to 88 residues: Large ribosomal subunit protein eL34 (88 aa).

The disordered stretch occupies residues Arg-41 to Cys-72.

Belongs to the eukaryotic ribosomal protein eL34 family.

The protein is Large ribosomal subunit protein eL34 of Thermococcus sibiricus (strain DSM 12597 / MM 739).